A 263-amino-acid polypeptide reads, in one-letter code: UPF0739 protein C1orf74 homolog (263 aa).

This sequence belongs to the UPF0739 family.

The sequence is that of UPF0739 protein C1orf74 homolog from Rattus norvegicus (Rat).